The primary structure comprises 108 residues: Insulin (108 aa).

Positions 1–21 are cleaved as a signal peptide; that stretch reads MAVWLQAGALLVLLVVSSVST. 3 disulfides stabilise this stretch: Cys30–Cys94, Cys42–Cys107, and Cys93–Cys98. The propeptide at 54-84 is c peptide; sequence DVEPLLGFLPPKSAQETEVADFAFKDHAELI.

Belongs to the insulin family. In terms of assembly, heterodimer of a B chain and an A chain linked by two disulfide bonds.

The protein resides in the secreted. Insulin decreases blood glucose concentration. It increases cell permeability to monosaccharides, amino acids and fatty acids. It accelerates glycolysis, the pentose phosphate cycle, and glycogen synthesis in liver. The sequence is that of Insulin (ins) from Danio rerio (Zebrafish).